Here is a 324-residue protein sequence, read N- to C-terminus: Phospho-N-acetylmuramoyl-pentapeptide-transferase (324 aa).

The next 10 helical transmembrane spans lie at 5-25, 52-72, 77-97, 117-137, 147-167, 176-196, 202-222, 227-247, 253-273, and 302-322; these read GLLVTAGVAFLISVALSPLFI, PTMGGIVIYVSMMVTTLIMAI, LGAEVSLLLLVTFGYGLIGFL, LLGQLIIAIAFFAIAKGQGFD, ITFDLYWAYFILVLFMLIGGS, LDGLLSGTAAIAFGAFSIIAV, AVAIFCMAVVGAVLGFLVFNA, VFMGDTGSLALGGAIAAVAIL, LLVIIGGVFVMETLSVIIQVI, and VVVTFWSVGFLLAVLGIYIGV.

This sequence belongs to the glycosyltransferase 4 family. MraY subfamily. Mg(2+) serves as cofactor.

It is found in the cell membrane. It catalyses the reaction UDP-N-acetyl-alpha-D-muramoyl-L-alanyl-gamma-D-glutamyl-meso-2,6-diaminopimeloyl-D-alanyl-D-alanine + di-trans,octa-cis-undecaprenyl phosphate = di-trans,octa-cis-undecaprenyl diphospho-N-acetyl-alpha-D-muramoyl-L-alanyl-D-glutamyl-meso-2,6-diaminopimeloyl-D-alanyl-D-alanine + UMP. Its pathway is cell wall biogenesis; peptidoglycan biosynthesis. Functionally, catalyzes the initial step of the lipid cycle reactions in the biosynthesis of the cell wall peptidoglycan: transfers peptidoglycan precursor phospho-MurNAc-pentapeptide from UDP-MurNAc-pentapeptide onto the lipid carrier undecaprenyl phosphate, yielding undecaprenyl-pyrophosphoryl-MurNAc-pentapeptide, known as lipid I. In Bacillus cytotoxicus (strain DSM 22905 / CIP 110041 / 391-98 / NVH 391-98), this protein is Phospho-N-acetylmuramoyl-pentapeptide-transferase.